The following is a 175-amino-acid chain: Regenerating islet-derived protein 3-beta (175 aa).

Residues 1–26 (MLHRLAFPVMSWMLLSCLMLLSQVQG) form the signal peptide. The propeptide occupies 27–37 (EDSPKKIPSAR). 3 cysteine pairs are disulfide-bonded: Cys40–Cys51, Cys68–Cys171, and Cys146–Cys163. Residues 47-172 (YGSYCYALFQ…CEVKLPYVCK (126 aa)) enclose the C-type lectin domain. Residue His107 coordinates Zn(2+). The short motif at 114 to 116 (EPN) is the EPN element. Glu121 is a Zn(2+) binding site.

As to quaternary structure, forms a hexameric membrane-permeabilizing oligomeric pore on membrane phospholipids. The hexamer is formed by three dimers related by helical symmetry. Forms filaments, filamentation traps pore complexes and limits damage to host cells. Interacts with EXTL3. Proteolytic processing by trypsin removes an inhibitory N-terminal propeptide and is essential for peptidoglycan binding and antibacterial activity. As to expression, constitutively expressed in intestine.

It localises to the secreted. Lipopolysaccharide inhibits pore-forming activity, explaining why is bactericidal for Gram-positive but not Gram-negative bacteria. In terms of biological role, bactericidal C-type lectin which acts against several intestinal Gram-positive bacteria and Gram-negative bacteria. Lacks antibacterial activity against S.typhimurium. May play a role in protection against infection with S.enteritidis by inhibiting its translocation from the gut lumen into intestinal tissues and further extraintestinal tissues. Functionally, acts as a hormone in response to different stimuli. Secreted by different cell types to activate its receptor EXTL3 and induce cell specific signaling pathways. In pancreas, is able stimulate cell proliferation. This chain is Regenerating islet-derived protein 3-beta, found in Rattus norvegicus (Rat).